Here is a 68-residue protein sequence, read N- to C-terminus: Large ribosomal subunit protein bL35 (68 aa).

The protein belongs to the bacterial ribosomal protein bL35 family.

This is Large ribosomal subunit protein bL35 from Aster yellows witches'-broom phytoplasma (strain AYWB).